Consider the following 90-residue polypeptide: Probable Fe(2+)-trafficking protein (90 aa).

Belongs to the Fe(2+)-trafficking protein family.

Functionally, could be a mediator in iron transactions between iron acquisition and iron-requiring processes, such as synthesis and/or repair of Fe-S clusters in biosynthetic enzymes. This chain is Probable Fe(2+)-trafficking protein, found in Aeromonas salmonicida (strain A449).